Reading from the N-terminus, the 706-residue chain is Elongation factor G (706 aa).

The region spanning 8–290 (KRYRNIGIVA…GVIEYMPSPT (283 aa)) is the tr-type G domain. GTP contacts are provided by residues 17-24 (AHVDAGKT), 88-92 (DTPGH), and 142-145 (NKMD).

This sequence belongs to the TRAFAC class translation factor GTPase superfamily. Classic translation factor GTPase family. EF-G/EF-2 subfamily.

It is found in the cytoplasm. In terms of biological role, catalyzes the GTP-dependent ribosomal translocation step during translation elongation. During this step, the ribosome changes from the pre-translocational (PRE) to the post-translocational (POST) state as the newly formed A-site-bound peptidyl-tRNA and P-site-bound deacylated tRNA move to the P and E sites, respectively. Catalyzes the coordinated movement of the two tRNA molecules, the mRNA and conformational changes in the ribosome. This Chromohalobacter salexigens (strain ATCC BAA-138 / DSM 3043 / CIP 106854 / NCIMB 13768 / 1H11) protein is Elongation factor G.